The sequence spans 157 residues: Small ribosomal subunit protein uS7 (157 aa).

It belongs to the universal ribosomal protein uS7 family. In terms of assembly, part of the 30S ribosomal subunit. Contacts proteins S9 and S11.

In terms of biological role, one of the primary rRNA binding proteins, it binds directly to 16S rRNA where it nucleates assembly of the head domain of the 30S subunit. Is located at the subunit interface close to the decoding center, probably blocks exit of the E-site tRNA. In Leptospira biflexa serovar Patoc (strain Patoc 1 / Ames), this protein is Small ribosomal subunit protein uS7.